Consider the following 190-residue polypeptide: Interferon alpha-9 (190 aa).

Residues 1-23 (MARPFAFLMVLVVISYWSTCSLG) form the signal peptide. Intrachain disulfides connect Cys24/Cys122 and Cys52/Cys162. Asn101 is a glycosylation site (N-linked (GlcNAc...) asparagine).

The protein belongs to the alpha/beta interferon family.

Its subcellular location is the secreted. In terms of biological role, produced by macrophages, IFN-alpha have antiviral activities. Interferon stimulates the production of two enzymes: a protein kinase and an oligoadenylate synthetase. The protein is Interferon alpha-9 (Ifna9) of Mus musculus (Mouse).